We begin with the raw amino-acid sequence, 299 residues long: Nucleotide-binding protein SCO1952 (299 aa).

23 to 30 (GMSGAGRS) is an ATP binding site. GTP is bound at residue 74–77 (DVRG).

Belongs to the RapZ-like family.

Displays ATPase and GTPase activities. The chain is Nucleotide-binding protein SCO1952 from Streptomyces coelicolor (strain ATCC BAA-471 / A3(2) / M145).